The chain runs to 94 residues: Na(+)/H(+) antiporter subunit F (94 aa).

The next 3 helical transmembrane spans lie at 2–22 (FTLILQIALGIMAVSTFLYVI), 34–54 (VVALDAIGINLIAITALVSIL), and 59–79 (AFLDIILLLGILSFIGTIAFS).

This sequence belongs to the CPA3 antiporters (TC 2.A.63) subunit F family. As to quaternary structure, forms a heterooligomeric complex that consists of seven subunits: MrpA, MrpB, MrpC, MrpD, MrpE, MrpF and MrpG.

Its subcellular location is the cell membrane. Its function is as follows. Mrp complex is a Na(+)/H(+) antiporter that is considered to be the major Na(+) excretion system in B.subtilis. Has a major role in Na(+) resistance and a minor role in Na(+)- and K(+)-dependent pH homeostasis as compared to TetB. MrpA may be the actual Na(+)/H(+) antiporter, although the six other Mrp proteins are all required for Na(+)/H(+) antiport activity and Na(+) resistance. MrpA is required for initiation of sporulation when external Na(+) concentration increases. Also transports Li(+) but not K(+), Ca(2+) or Mg(2+). Involved in cholate and Na(+) efflux activities, which may be mechanistically coupled. Does not require other Mrp proteins for its own function. The sequence is that of Na(+)/H(+) antiporter subunit F (mrpF) from Bacillus subtilis (strain 168).